A 328-amino-acid polypeptide reads, in one-letter code: dTDP-3,4-didehydro-2,6-dideoxy-alpha-D-glucose 3-reductase (328 aa).

A substrate-binding site is contributed by arginine 20. NADP(+) contacts are provided by residues 38–39 (SR), leucine 75, and histidine 80. Catalysis depends on lysine 98, which acts as the Proton donor. NADP(+) is bound by residues arginine 166 and aspartate 178. Substrate-binding residues include tyrosine 236 and threonine 256.

The protein belongs to the Gfo/Idh/MocA family.

It carries out the reaction dTDP-4-dehydro-2,6-dideoxy-alpha-D-glucose + NADP(+) = dTDP-3,4-didehydro-2,6-dideoxy-alpha-D-glucose + NADPH + H(+). It participates in antibiotic biosynthesis. Functionally, involved in the biosynthesis of one of the two 2,6-deoxysugars, dTDP-L-oleandrose, attached to the macrolactone ring oleandolide to produce the aglycone antibiotic oleandomycin. Catalyzes the reduction of the C-3 keto moiety of dTDP-3,4-diketo-2,6-dideoxy-alpha-D-glucose to yield dTDP-4-keto-2,6-dideoxy-alpha-D-glucose. NADPH is the better reductant, however NADH can also be used. The protein is dTDP-3,4-didehydro-2,6-dideoxy-alpha-D-glucose 3-reductase of Streptomyces antibioticus.